Reading from the N-terminus, the 346-residue chain is NADH-ubiquinone oxidoreductase chain 2 (346 aa).

The next 10 membrane-spanning stretches (helical) occupy residues 25–45, 52–72, 95–115, 124–144, 149–169, 178–198, 200–220, 242–262, 274–294, and 326–346; these read HWIL…PLIS, AIEA…LILF, CLML…HFWF, LITA…LLLL, LNTT…GWMG, ILAF…SYNP, LTIL…LSLA, ATVM…GFMP, EMTP…FFYL, and AILT…ITML.

It belongs to the complex I subunit 2 family. Core subunit of respiratory chain NADH dehydrogenase (Complex I) which is composed of 45 different subunits.

Its subcellular location is the mitochondrion inner membrane. The catalysed reaction is a ubiquinone + NADH + 5 H(+)(in) = a ubiquinol + NAD(+) + 4 H(+)(out). In terms of biological role, core subunit of the mitochondrial membrane respiratory chain NADH dehydrogenase (Complex I) which catalyzes electron transfer from NADH through the respiratory chain, using ubiquinone as an electron acceptor. Essential for the catalytic activity and assembly of complex I. The protein is NADH-ubiquinone oxidoreductase chain 2 (MT-ND2) of Gallus gallus (Chicken).